The sequence spans 383 residues: Na(+)/H(+) antiporter NhaA (383 aa).

Helical transmembrane passes span 19-39 (AGGV…NSPL), 56-76 (VLHG…GLEI), 92-112 (ILPG…FLAL), 122-142 (GWAV…ALLG), 151-171 (IFLT…IALF), 174-194 (AKLS…LAAL), 212-232 (LWGA…ALAL), 255-275 (VGYG…FAGL), 292-312 (LLFG…WLGF), 326-346 (GVAV…ALAF), and 356-376 (VKVG…LVLL).

It belongs to the NhaA Na(+)/H(+) (TC 2.A.33) antiporter family.

The protein resides in the cell inner membrane. The enzyme catalyses Na(+)(in) + 2 H(+)(out) = Na(+)(out) + 2 H(+)(in). Its function is as follows. Na(+)/H(+) antiporter that extrudes sodium in exchange for external protons. The chain is Na(+)/H(+) antiporter NhaA from Paramagnetospirillum magneticum (strain ATCC 700264 / AMB-1) (Magnetospirillum magneticum).